The chain runs to 557 residues: Membrane protein insertase YidC (557 aa).

The next 5 membrane-spanning stretches (helical) occupy residues 3 to 23 (IKRTVLWVIFFMSAVMLFDNW), 363 to 383 (FVGNWGWAIVLLTLLIKAVFF), 437 to 457 (LPVVIQIPVFISLYWVLLASV), 476 to 496 (PYFILPVLMAVSMFVQTKLNP), and 507 to 527 (MMFMPIAFSVMFFFFPAGLVL).

It belongs to the OXA1/ALB3/YidC family. Type 1 subfamily. In terms of assembly, interacts with the Sec translocase complex via SecD. Specifically interacts with transmembrane segments of nascent integral membrane proteins during membrane integration.

The protein resides in the cell inner membrane. Its function is as follows. Required for the insertion and/or proper folding and/or complex formation of integral membrane proteins into the membrane. Involved in integration of membrane proteins that insert both dependently and independently of the Sec translocase complex, as well as at least some lipoproteins. Aids folding of multispanning membrane proteins. The protein is Membrane protein insertase YidC of Burkholderia thailandensis (strain ATCC 700388 / DSM 13276 / CCUG 48851 / CIP 106301 / E264).